Here is a 195-residue protein sequence, read N- to C-terminus: Probable DNA-directed RNA polymerase subunit delta (195 aa).

Residues 14 to 83 (LSMIEVARAI…GDNKWGLRSW (70 aa)) enclose the HTH HARE-type domain. Acidic residues-rich tracts occupy residues 120-138 (DSDAIDYNADDPEDEDAYE) and 145-195 (YDDE…TSEE). The segment at 120–195 (DSDAIDYNAD…SDDDAETSEE (76 aa)) is disordered.

It belongs to the RpoE family. RNAP is composed of a core of 2 alpha, a beta and a beta' subunits. The core is associated with a delta subunit and one of several sigma factors.

In terms of biological role, participates in both the initiation and recycling phases of transcription. In the presence of the delta subunit, RNAP displays an increased specificity of transcription, a decreased affinity for nucleic acids, and an increased efficiency of RNA synthesis because of enhanced recycling. This is Probable DNA-directed RNA polymerase subunit delta from Streptococcus pneumoniae serotype 2 (strain D39 / NCTC 7466).